The chain runs to 191 residues: Dephospho-CoA kinase (191 aa).

The region spanning 3 to 191 (AIGITGSYAS…KLIKDLECRV (189 aa)) is the DPCK domain. Position 11-16 (11-16 (ASGKTF)) interacts with ATP.

It belongs to the CoaE family.

The protein resides in the cytoplasm. It catalyses the reaction 3'-dephospho-CoA + ATP = ADP + CoA + H(+). The protein operates within cofactor biosynthesis; coenzyme A biosynthesis; CoA from (R)-pantothenate: step 5/5. Catalyzes the phosphorylation of the 3'-hydroxyl group of dephosphocoenzyme A to form coenzyme A. This is Dephospho-CoA kinase from Rickettsia conorii (strain ATCC VR-613 / Malish 7).